Consider the following 769-residue polypeptide: Elongation factor G, mitochondrial (769 aa).

The transit peptide at 1-42 directs the protein to the mitochondrion; it reads MSKFLRGISSISSASLKARASNFGVFHGVCSARNLHQSRLCL. The 283-residue stretch at 74 to 356 folds into the tr-type G domain; sequence TRLRNIGVSA…AVVDYLPQPN (283 aa). GTP is bound by residues 83–90, 154–158, and 208–211; these read AHIDSGKT, DTPGH, and NKMD.

It belongs to the TRAFAC class translation factor GTPase superfamily. Classic translation factor GTPase family. EF-G/EF-2 subfamily.

Its subcellular location is the mitochondrion. Its pathway is protein biosynthesis; polypeptide chain elongation. Its function is as follows. Mitochondrial GTPase that catalyzes the GTP-dependent ribosomal translocation step during translation elongation. During this step, the ribosome changes from the pre-translocational (PRE) to the post-translocational (POST) state as the newly formed A-site-bound peptidyl-tRNA and P-site-bound deacylated tRNA move to the P and E sites, respectively. Catalyzes the coordinated movement of the two tRNA molecules, the mRNA and conformational changes in the ribosome. The polypeptide is Elongation factor G, mitochondrial (Debaryomyces hansenii (strain ATCC 36239 / CBS 767 / BCRC 21394 / JCM 1990 / NBRC 0083 / IGC 2968) (Yeast)).